Here is a 211-residue protein sequence, read N- to C-terminus: Small ribosomal subunit protein bS6c alpha (211 aa).

Residues 1-19 (MATFSLTSTLPSSSPTTSL) are compositionally biased toward low complexity. Disordered stretches follow at residues 1–25 (MATF…IPKP) and 80–100 (DEDP…PEPQ). The transit peptide at 1–65 (MATFSLTSTL…YGPYVKAIAL (65 aa)) directs the protein to the chloroplast.

This sequence belongs to the bacterial ribosomal protein bS6 family. As to quaternary structure, component of the chloroplast small ribosomal subunit (SSU). Mature 70S chloroplast ribosomes of higher plants consist of a small (30S) and a large (50S) subunit. The 30S small subunit contains 1 molecule of ribosomal RNA (16S rRNA) and 24 different proteins. The 50S large subunit contains 3 rRNA molecules (23S, 5S and 4.5S rRNA) and 33 different proteins.

It localises to the plastid. Its subcellular location is the chloroplast. Its function is as follows. Component of the chloroplast ribosome (chloro-ribosome), a dedicated translation machinery responsible for the synthesis of chloroplast genome-encoded proteins, including proteins of the transcription and translation machinery and components of the photosynthetic apparatus. This chain is Small ribosomal subunit protein bS6c alpha (RPS6), found in Spinacia oleracea (Spinach).